Consider the following 78-residue polypeptide: Beta-defensin 135 (78 aa).

Positions 1–24 (MATRSVLLALVVLNLLFYVPPGRS) are cleaved as a signal peptide. Cystine bridges form between Cys37/Cys64 and Cys48/Cys66.

It belongs to the beta-defensin family.

It localises to the secreted. Functionally, has antibacterial activity. The sequence is that of Beta-defensin 135 (DEFB135) from Pan troglodytes (Chimpanzee).